Consider the following 1758-residue polypeptide: Condensin-2 complex subunit hcp-6 (1758 aa).

Disordered regions lie at residues 428–501 (DPGA…KAKE), 969–1008 (ENGS…KGGM), 1379–1460 (QKRL…ARLL), and 1500–1656 (SKQA…LSRG). Residues 438–462 (EQNEEEDEEEEGEDEEEEEENEQDD) show a composition bias toward acidic residues. Residues 463-473 (VAVKEEEQSDK) show a composition bias toward basic and acidic residues. Residues 474–484 (SDEENDGDNEE) are compositionally biased toward acidic residues. Over residues 485–501 (NVSKKKEEKKKEKKAKE) the composition is skewed to basic and acidic residues. Polar residues predominate over residues 969 to 979 (ENGSSDASTVN). The span at 999–1008 (SSQKSSKGGM) shows a compositional bias: low complexity. Residues 1326-1385 (CIEHKNDIDEILQDNRQLKDEMMFELQRVKQRTEEANRILDEYLKRVAEFKKQQKRLSKS) adopt a coiled-coil conformation. Positions 1414–1423 (EDQENVEEEV) are enriched in acidic residues. Composition is skewed to basic and acidic residues over residues 1424-1437 (EMRT…DADV) and 1500-1512 (SKQA…KTIV). Polar residues-rich tracts occupy residues 1602–1618 (ISAN…QSTE) and 1640–1651 (VPTSSSGNTEND).

In terms of assembly, component of the condensin-2 complex.

The protein resides in the nucleus. It is found in the chromosome. The protein localises to the centromere. Its function is as follows. Chromosomal protein which is recruited to mitotic chromosomes by hcp-3 (CENP-A) and hcp-4 (CENP-C). Involved in chromosome segregation during mitosis, playing a role in chromosome condensation and in maintaining chromosome morphology, rigidity and orientation during mitosis. The polypeptide is Condensin-2 complex subunit hcp-6 (Caenorhabditis elegans).